Reading from the N-terminus, the 357-residue chain is UPF0283 membrane protein BAbS19_I09770 (357 aa).

Residues 1 to 36 (MSDKTPRKPTAFRLEQPARVSAASEQEEPRRPRAVK) are disordered. A compositionally biased stretch (basic and acidic residues) spans 27 to 36 (EEPRRPRAVK). Helical transmembrane passes span 78–98 (ILFG…TEDL) and 109–129 (LGWT…AIIL).

It belongs to the UPF0283 family.

The protein resides in the cell inner membrane. In Brucella abortus (strain S19), this protein is UPF0283 membrane protein BAbS19_I09770.